The sequence spans 486 residues: MSYNNKSIKELHELLVNKEISALELTKATLSDISAREPQIDAFLKITEEKALQDAAAIDARGINPDVVTDGISIAVKDNIVTEGIETTAASKILGGWIPPYNATVANKLSESGLITIGKLNMDEFAMGGSGENSSVKPTKNAWDQTKVPGGSSSGSAASVASGQVRLSLGSDTGGSIRQPAAFNGIVGLKPTYGRVSRFGLIAFASSLDQIGPLAPTVEENAQLLNVISGFDKNDSTSSNVAVPDFTSKIGQDIKGMKIALPKEYFGEGIDEKVKEQILAAAKHLEKLGAIVEEVSLPHSKYGVAVYYIIASSEASSNLQRFDGIRYGYRAQDIKNLEDLYVKSRSEGFGPEVQRRIMLGTFSLSAGSYDKHFKKAGQVRTLIINDFAKVFEKYDLILGPTTPTPAWDLGARVDDPLSMYLADLLTIPVNLAGLPGISIPAGFADGLPVGMQLIGKRYDEETIYKVAAAFEATTDFHKKQPIIFGK.

Lys-77 functions as the Charge relay system in the catalytic mechanism. The interval 130 to 158 (SGENSSVKPTKNAWDQTKVPGGSSSGSAA) is disordered. The segment covering 132 to 144 (ENSSVKPTKNAWD) has biased composition (polar residues). Ser-152 serves as the catalytic Charge relay system. The active-site Acyl-ester intermediate is Ser-176.

It belongs to the amidase family. GatA subfamily. Heterotrimer of A, B and C subunits.

The enzyme catalyses L-glutamyl-tRNA(Gln) + L-glutamine + ATP + H2O = L-glutaminyl-tRNA(Gln) + L-glutamate + ADP + phosphate + H(+). Allows the formation of correctly charged Gln-tRNA(Gln) through the transamidation of misacylated Glu-tRNA(Gln) in organisms which lack glutaminyl-tRNA synthetase. The reaction takes place in the presence of glutamine and ATP through an activated gamma-phospho-Glu-tRNA(Gln). This is Glutamyl-tRNA(Gln) amidotransferase subunit A (gatA) from Lactococcus lactis subsp. lactis (strain IL1403) (Streptococcus lactis).